Reading from the N-terminus, the 460-residue chain is Probable argininosuccinate lyase (460 aa).

2-(N(omega)-L-arginino)succinate is bound by residues Ser26, Asn114, and Thr159. The Proton acceptor role is filled by His160. Residue Ser281 is the Proton donor of the active site. 2-(N(omega)-L-arginino)succinate is bound by residues Asn289, Tyr321, Gln326, and Lys329.

The protein belongs to the lyase 1 family. Argininosuccinate lyase subfamily. In terms of assembly, homotetramer.

The enzyme catalyses 2-(N(omega)-L-arginino)succinate = fumarate + L-arginine. It participates in amino-acid biosynthesis; L-arginine biosynthesis; L-arginine from L-ornithine and carbamoyl phosphate: step 3/3. This chain is Probable argininosuccinate lyase (argx), found in Schizosaccharomyces pombe (strain 972 / ATCC 24843) (Fission yeast).